Consider the following 277-residue polypeptide: Large ribosomal subunit protein uL2 (277 aa).

Disordered regions lie at residues 35 to 57 (RPLH…QGGG) and 222 to 277 (GVAM…NRRR). 2 stretches are compositionally biased toward basic residues: residues 37-57 (LHSK…QGGG) and 268-277 (VRRRKQNRRR).

Belongs to the universal ribosomal protein uL2 family. Part of the 50S ribosomal subunit. Forms a bridge to the 30S subunit in the 70S ribosome.

Its function is as follows. One of the primary rRNA binding proteins. Required for association of the 30S and 50S subunits to form the 70S ribosome, for tRNA binding and peptide bond formation. It has been suggested to have peptidyltransferase activity; this is somewhat controversial. Makes several contacts with the 16S rRNA in the 70S ribosome. The sequence is that of Large ribosomal subunit protein uL2 from Frankia casuarinae (strain DSM 45818 / CECT 9043 / HFP020203 / CcI3).